The following is a 715-amino-acid chain: ATP-dependent DNA helicase Hel308 (715 aa).

ATP is bound by residues Q35 and 53-60 (SPTGSGKT). The Helicase ATP-binding domain maps to 40-203 (KKGLLDGNRL…WLGAEPVATN (164 aa)). Positions 152-155 (DELH) match the DEAH box motif. The 207-residue stretch at 236-442 (HGDDAIIAYT…ERAFYTFLLG (207 aa)) folds into the Helicase C-terminal domain.

It belongs to the helicase family. Hel308 subfamily. Monomer. Interacts with PINA ATPase which decreases both DNA helicase activities of this protein.

It carries out the reaction Couples ATP hydrolysis with the unwinding of duplex DNA by translocating in the 3'-5' direction.. It catalyses the reaction ATP + H2O = ADP + phosphate + H(+). The enzyme catalyses Couples ATP hydrolysis with the unwinding of duplex DNA at the replication fork by translocating in the 5'-3' direction. This creates two antiparallel DNA single strands (ssDNA). The leading ssDNA polymer is the template for DNA polymerase III holoenzyme which synthesizes a continuous strand.. Its activity is regulated as follows. PINA inhibits the (weak) 5'-3' but not the 3'-5' helicase activity of this protein on overhang substrates. Its function is as follows. DNA-dependent ATPase and 3'-5' DNA helicase that may be involved in repair of stalled replication forks. In terms of biological role, has predominantly 3'-5' helicase activity but also a weak 5'-3' helicase activity. Has the ability to unwind replication forks, preferentially removing the lagging strand. Hjc, Hjm (Hel308) and branch migration ATPase PINA coordinate HJ migration and cleavage of replication forks in a coordinated way. In Saccharolobus islandicus (strain REY15A) (Sulfolobus islandicus), this protein is ATP-dependent DNA helicase Hel308.